The chain runs to 356 residues: Alanine racemase, catabolic (356 aa).

Lys-35 serves as the catalytic Proton acceptor; specific for D-alanine. The residue at position 35 (Lys-35) is an N6-(pyridoxal phosphate)lysine. Arg-130 contacts substrate. Tyr-253 serves as the catalytic Proton acceptor; specific for L-alanine. Met-301 contacts substrate.

It belongs to the alanine racemase family. Requires pyridoxal 5'-phosphate as cofactor.

It carries out the reaction L-alanine = D-alanine. Functionally, isomerizes L-alanine to D-alanine which is then oxidized to pyruvate by DadA. The chain is Alanine racemase, catabolic (dadX) from Escherichia coli O157:H7.